Reading from the N-terminus, the 131-residue chain is Profilin (131 aa).

Belongs to the profilin family. As to quaternary structure, occurs in many kinds of cells as a complex with monomeric actin in a 1:1 ratio.

Its subcellular location is the cytoplasm. It is found in the cytoskeleton. Functionally, binds to actin and affects the structure of the cytoskeleton. At high concentrations, profilin prevents the polymerization of actin, whereas it enhances it at low concentrations. By binding to PIP2, it inhibits the formation of IP3 and DG. The chain is Profilin from Prunus dulcis (Almond).